A 416-amino-acid polypeptide reads, in one-letter code: Lipase (416 aa).

The N-terminal stretch at 1 to 28 is a signal peptide; it reads MKCCRIMFVLLGLWFVFGLSVPGGRTEA. Ser-141 functions as the Nucleophile in the catalytic mechanism. Ca(2+) is bound at residue Gly-314. Asp-345 (charge relay system) is an active-site residue. Residue Asp-385 coordinates Ca(2+). The active-site Charge relay system is the His-386. Residues Glu-388, Asp-393, and Pro-394 each coordinate Ca(2+).

The protein belongs to the AB hydrolase superfamily. Homodimer.

The protein resides in the secreted. It carries out the reaction a triacylglycerol + H2O = a diacylglycerol + a fatty acid + H(+). With respect to regulation, activity is inhibited by zinc and iron ions, and activated in vitro in 25% v/v DMSO and acetone. Functionally, triacylglycerol hydrolase that shows hydrolysis preference towards some of the natural oils such as olive, sunflower and corn oils. In Bacillus sp, this protein is Lipase.